We begin with the raw amino-acid sequence, 182 residues long: ATP-dependent protease subunit HslV (182 aa).

Thr-12 is a catalytic residue. 3 residues coordinate Na(+): Ala-167, Cys-170, and Thr-173.

It belongs to the peptidase T1B family. HslV subfamily. In terms of assembly, a double ring-shaped homohexamer of HslV is capped on each side by a ring-shaped HslU homohexamer. The assembly of the HslU/HslV complex is dependent on binding of ATP.

It localises to the cytoplasm. The catalysed reaction is ATP-dependent cleavage of peptide bonds with broad specificity.. With respect to regulation, allosterically activated by HslU binding. Protease subunit of a proteasome-like degradation complex believed to be a general protein degrading machinery. This Chlorobium limicola (strain DSM 245 / NBRC 103803 / 6330) protein is ATP-dependent protease subunit HslV.